The chain runs to 237 residues: Probable transcriptional regulatory protein Fjoh_2560 (237 aa).

Belongs to the TACO1 family.

Its subcellular location is the cytoplasm. In Flavobacterium johnsoniae (strain ATCC 17061 / DSM 2064 / JCM 8514 / BCRC 14874 / CCUG 350202 / NBRC 14942 / NCIMB 11054 / UW101) (Cytophaga johnsonae), this protein is Probable transcriptional regulatory protein Fjoh_2560.